The chain runs to 156 residues: Putative pre-16S rRNA nuclease (156 aa).

It belongs to the YqgF nuclease family.

It localises to the cytoplasm. In terms of biological role, could be a nuclease involved in processing of the 5'-end of pre-16S rRNA. The chain is Putative pre-16S rRNA nuclease from Nocardioides sp. (strain ATCC BAA-499 / JS614).